The following is a 424-amino-acid chain: Serine--tRNA ligase (424 aa).

An L-serine-binding site is contributed by 231–233; that stretch reads TAE. Residue 262–264 participates in ATP binding; the sequence is RSE. Glu285 serves as a coordination point for L-serine. 349 to 352 is a binding site for ATP; it reads EISS. Ser385 contacts L-serine.

This sequence belongs to the class-II aminoacyl-tRNA synthetase family. Type-1 seryl-tRNA synthetase subfamily. Homodimer. The tRNA molecule binds across the dimer.

The protein localises to the cytoplasm. It catalyses the reaction tRNA(Ser) + L-serine + ATP = L-seryl-tRNA(Ser) + AMP + diphosphate + H(+). It carries out the reaction tRNA(Sec) + L-serine + ATP = L-seryl-tRNA(Sec) + AMP + diphosphate + H(+). Its pathway is aminoacyl-tRNA biosynthesis; selenocysteinyl-tRNA(Sec) biosynthesis; L-seryl-tRNA(Sec) from L-serine and tRNA(Sec): step 1/1. Catalyzes the attachment of serine to tRNA(Ser). Is also able to aminoacylate tRNA(Sec) with serine, to form the misacylated tRNA L-seryl-tRNA(Sec), which will be further converted into selenocysteinyl-tRNA(Sec). This is Serine--tRNA ligase from Bacillus cereus (strain ATCC 10987 / NRS 248).